A 196-amino-acid polypeptide reads, in one-letter code: UMP-CMP kinase (196 aa).

Residue glycine 13–threonine 18 coordinates ATP. Residues serine 33–valine 63 form an NMP region. A ribonucleoside 5'-phosphate-binding positions include arginine 39, arginine 61–valine 63, and glycine 93–arginine 96. Asparagine 100 serves as a coordination point for CMP. Residues glutamate 133 to aspartate 143 are LID. Arginine 134 is a binding site for ATP. Arginine 140 and arginine 151 together coordinate a ribonucleoside 5'-phosphate. Lysine 179 is a binding site for ATP.

This sequence belongs to the adenylate kinase family. UMP-CMP kinase subfamily. Monomer. Requires Mg(2+) as cofactor.

The protein resides in the cytoplasm. It localises to the nucleus. It catalyses the reaction CMP + ATP = CDP + ADP. The enzyme catalyses dCMP + ATP = dCDP + ADP. It carries out the reaction UMP + ATP = UDP + ADP. The catalysed reaction is a 2'-deoxyribonucleoside 5'-diphosphate + ATP = a 2'-deoxyribonucleoside 5'-triphosphate + ADP. It catalyses the reaction a ribonucleoside 5'-diphosphate + ATP = a ribonucleoside 5'-triphosphate + ADP. In terms of biological role, catalyzes the phosphorylation of pyrimidine nucleoside monophosphates at the expense of ATP. Plays an important role in de novo pyrimidine nucleotide biosynthesis. Has preference for UMP and CMP as phosphate acceptors. Also displays broad nucleoside diphosphate kinase activity. The sequence is that of UMP-CMP kinase (cmpk1) from Xenopus tropicalis (Western clawed frog).